A 517-amino-acid polypeptide reads, in one-letter code: C-22 sterol desaturase ERG5 (517 aa).

The helical transmembrane segment at 21–41 threads the bilayer; the sequence is LAVAKATGSPITTLFTIIFLI. Residue C458 participates in heme binding.

Belongs to the cytochrome P450 family. Requires heme as cofactor.

It is found in the endoplasmic reticulum membrane. It catalyses the reaction 5-dehydroepisterol + NADPH + O2 + H(+) = ergosta-5,7,22,24(28)-tetraen-3beta-ol + NADP(+) + 2 H2O. It participates in steroid metabolism; ergosterol biosynthesis; ergosterol from zymosterol: step 4/5. Its function is as follows. C-22 sterol desaturase; part of the third module of ergosterol biosynthesis pathway that includes the late steps of the pathway. ERG5 converts 5-dehydroepisterol into ergosta-5,7,22,24(28)-tetraen-3beta-ol by forming the C-22(23) double bond in the sterol side chain. The third module or late pathway involves the ergosterol synthesis itself through consecutive reactions that mainly occur in the endoplasmic reticulum (ER) membrane. Firstly, the squalene synthase ERG9 catalyzes the condensation of 2 farnesyl pyrophosphate moieties to form squalene, which is the precursor of all steroids. Squalene synthase is crucial for balancing the incorporation of farnesyl diphosphate (FPP) into sterol and nonsterol isoprene synthesis. Secondly, the squalene epoxidase ERG1 catalyzes the stereospecific oxidation of squalene to (S)-2,3-epoxysqualene, which is considered to be a rate-limiting enzyme in steroid biosynthesis. Then, the lanosterol synthase ERG7 catalyzes the cyclization of (S)-2,3 oxidosqualene to lanosterol, a reaction that forms the sterol core. In the next steps, lanosterol is transformed to zymosterol through a complex process involving various demethylation, reduction and desaturation reactions. The lanosterol 14-alpha-demethylase ERG11 (also known as CYP51) catalyzes C14-demethylation of lanosterol to produce 4,4'-dimethyl cholesta-8,14,24-triene-3-beta-ol, which is critical for ergosterol biosynthesis. The C-14 reductase ERG24 reduces the C14=C15 double bond of 4,4-dimethyl-cholesta-8,14,24-trienol to produce 4,4-dimethyl-cholesta-8,24-dienol. 4,4-dimethyl-cholesta-8,24-dienol is substrate of the C-4 demethylation complex ERG25-ERG26-ERG27 in which ERG25 catalyzes the three-step monooxygenation required for the demethylation of 4,4-dimethyl and 4alpha-methylsterols, ERG26 catalyzes the oxidative decarboxylation that results in a reduction of the 3-beta-hydroxy group at the C-3 carbon to an oxo group, and ERG27 is responsible for the reduction of the keto group on the C-3. ERG28 has a role as a scaffold to help anchor ERG25, ERG26 and ERG27 to the endoplasmic reticulum and ERG29 regulates the activity of the iron-containing C4-methylsterol oxidase ERG25. Then, the sterol 24-C-methyltransferase ERG6 catalyzes the methyl transfer from S-adenosyl-methionine to the C-24 of zymosterol to form fecosterol. The C-8 sterol isomerase ERG2 catalyzes the reaction which results in unsaturation at C-7 in the B ring of sterols and thus converts fecosterol to episterol. The sterol-C5-desaturase ERG3 then catalyzes the introduction of a C-5 double bond in the B ring to produce 5-dehydroepisterol. The C-22 sterol desaturase ERG5 further converts 5-dehydroepisterol into ergosta-5,7,22,24(28)-tetraen-3beta-ol by forming the C-22(23) double bond in the sterol side chain. Finally, ergosta-5,7,22,24(28)-tetraen-3beta-ol is substrate of the C-24(28) sterol reductase ERG4 to produce ergosterol. The polypeptide is C-22 sterol desaturase ERG5 (Candida albicans (strain SC5314 / ATCC MYA-2876) (Yeast)).